A 146-amino-acid chain; its full sequence is Hemoglobin subunit beta (146 aa).

V1 bears the N-acetylvaline mark. The Globin domain occupies 2 to 146; it reads HLTAEEKDAV…VANALAHRYH (145 aa). Position 44 is a phosphoserine (S44). Position 59 is an N6-acetyllysine (K59). H63 contributes to the heme b binding site. K82 is modified (N6-acetyllysine). H92 serves as a coordination point for heme b. The residue at position 93 (C93) is an S-nitrosocysteine.

The protein belongs to the globin family. As to quaternary structure, heterotetramer of two alpha chains and two beta chains. Red blood cells.

Its function is as follows. Involved in oxygen transport from the lung to the various peripheral tissues. The sequence is that of Hemoglobin subunit beta (HBB) from Hippopotamus amphibius (Hippopotamus).